A 382-amino-acid polypeptide reads, in one-letter code: RIB43A-like with coiled-coils protein 2 (382 aa).

Residues 222–255 are a coiled coil; that stretch reads NKSQAIESVERKKQEKKQEQEDNLAEITNLLRGD.

Belongs to the RIB43A family. In terms of assembly, microtubule inner protein component of sperm flagellar doublet microtubules. Expressed in airway epithelial cells.

Its subcellular location is the cytoplasm. It localises to the cytoskeleton. The protein resides in the cilium axoneme. The protein localises to the flagellum axoneme. Microtubule inner protein (MIP) part of the dynein-decorated doublet microtubules (DMTs) in cilia axoneme, which is required for motile cilia beating. The chain is RIB43A-like with coiled-coils protein 2 from Homo sapiens (Human).